We begin with the raw amino-acid sequence, 609 residues long: Pogo transposable element with KRAB domain (609 aa).

Disordered stretches follow at residues 1–28 and 100–127; these read MEST…ELED and EGEE…SDVK. Residues 8–28 adopt a coiled-coil conformation; it reads LNLSLKEEEEEEEIQSRELED. Residue K13 forms a Glycyl lysine isopeptide (Lys-Gly) (interchain with G-Cter in SUMO2) linkage. Residues 47 to 118 form the KRAB domain; sequence ALFDEVAIYF…DEWQLQGGTS (72 aa). The segment covering 108–119 has biased composition (polar residues); the sequence is SDEWQLQGGTSA. One can recognise an HTH CENPB-type domain in the interval 250–323; the sequence is AFRGPKNGRF…MRRYDLSLRH (74 aa). Residues 353 to 567 form the DDE-1 domain; it reads HDYEVAQMGN…ISSESIVQGF (215 aa). A Glycyl lysine isopeptide (Lys-Gly) (interchain with G-Cter in SUMO2) cross-link involves residue K384. The segment at 588–609 is disordered; that stretch reads SELPGGGEPPKDCDTESMAESN.

The protein resides in the nucleus. The sequence is that of Pogo transposable element with KRAB domain (POGK) from Homo sapiens (Human).